The primary structure comprises 511 residues: Lysine--tRNA ligase 2 (511 aa).

Residues methionine 1 to leucine 22 form a disordered region. 2 residues coordinate Mg(2+): glutamate 421 and glutamate 428.

The protein belongs to the class-II aminoacyl-tRNA synthetase family. Homodimer. Mg(2+) is required as a cofactor.

The protein resides in the cytoplasm. It catalyses the reaction tRNA(Lys) + L-lysine + ATP = L-lysyl-tRNA(Lys) + AMP + diphosphate. The protein is Lysine--tRNA ligase 2 of Methanosarcina mazei (strain ATCC BAA-159 / DSM 3647 / Goe1 / Go1 / JCM 11833 / OCM 88) (Methanosarcina frisia).